A 108-amino-acid polypeptide reads, in one-letter code: MKKTLLLCAFLVGLVSSNVMALTLDEARTQGRVGETFYGYLVALKTDAETEKLVADINAERKASYQQLAKQNNVSVDDIAKLAGQKLVARAKPGEYVQGINGKWVRKF.

Residues 1-21 (MKKTLLLCAFLVGLVSSNVMA) form the signal peptide.

It localises to the periplasm. Probably acts as a chaperone-like protein that contributes to, but is not required for, the formation of the YdbH-YnbE intermembrane bridge. Affects the function and the structure of the YdbH-YnbE complex. Overexpression of ydbL causes a negative effect on YdbH-YnbE function. In Escherichia coli (strain K12), this protein is Probable chaperone-like protein YdbL (ydbL).